A 42-amino-acid polypeptide reads, in one-letter code: Potassium channel toxin gamma-KTx 1.6 (42 aa).

4 disulfides stabilise this stretch: cysteine 5-cysteine 23, cysteine 11-cysteine 34, cysteine 20-cysteine 39, and cysteine 24-cysteine 41.

The protein belongs to the ergtoxin family. Gamma-KTx 1 subfamily. In terms of tissue distribution, expressed by the venom gland.

The protein localises to the secreted. Functionally, blocks Kv11/ERG potassium channels. The protein is Potassium channel toxin gamma-KTx 1.6 of Centruroides exilicauda (Bark scorpion).